We begin with the raw amino-acid sequence, 188 residues long: Shikimate kinase (188 aa).

21 to 26 (GAGKTT) lines the ATP pocket. T25 is a Mg(2+) binding site. Substrate-binding residues include D43, R67, and G90. R130 contacts ATP. R148 contributes to the substrate binding site.

The protein belongs to the shikimate kinase family. As to quaternary structure, monomer. Mg(2+) serves as cofactor.

It is found in the cytoplasm. It catalyses the reaction shikimate + ATP = 3-phosphoshikimate + ADP + H(+). It participates in metabolic intermediate biosynthesis; chorismate biosynthesis; chorismate from D-erythrose 4-phosphate and phosphoenolpyruvate: step 5/7. Catalyzes the specific phosphorylation of the 3-hydroxyl group of shikimic acid using ATP as a cosubstrate. The protein is Shikimate kinase of Geobacillus thermodenitrificans (strain NG80-2).